Consider the following 393-residue polypeptide: 8-amino-7-oxononanoate synthase (393 aa).

107–108 contacts pyridoxal 5'-phosphate; that stretch reads GF. A substrate-binding site is contributed by His132. Residues Ser180, 205 to 208, and 236 to 239 contribute to the pyridoxal 5'-phosphate site; these read DDAH and TLSK. Lys239 is subject to N6-(pyridoxal phosphate)lysine. Residue Thr353 coordinates substrate.

It belongs to the class-II pyridoxal-phosphate-dependent aminotransferase family. BioF subfamily. In terms of assembly, homodimer. Requires pyridoxal 5'-phosphate as cofactor.

It carries out the reaction 6-carboxyhexanoyl-[ACP] + L-alanine + H(+) = (8S)-8-amino-7-oxononanoate + holo-[ACP] + CO2. It participates in cofactor biosynthesis; biotin biosynthesis. Catalyzes the decarboxylative condensation of pimeloyl-[acyl-carrier protein] and L-alanine to produce 8-amino-7-oxononanoate (AON), [acyl-carrier protein], and carbon dioxide. This is 8-amino-7-oxononanoate synthase from Coprothermobacter proteolyticus (strain ATCC 35245 / DSM 5265 / OCM 4 / BT).